Consider the following 318-residue polypeptide: NADH-ubiquinone oxidoreductase chain 1 (318 aa).

8 helical membrane-spanning segments follow: residues 2-22, 69-89, 98-118, 140-160, 171-191, 222-242, 253-273, and 285-305; these read FMAN…FLTL, MLYL…WTPL, FNLG…SILW, ISYE…SGSF, HSWL…STLA, LFFM…TTIF, ETYS…FLWI, and LMHL…MWYI.

Belongs to the complex I subunit 1 family. Core subunit of respiratory chain NADH dehydrogenase (Complex I) which is composed of 45 different subunits.

Its subcellular location is the mitochondrion inner membrane. The enzyme catalyses a ubiquinone + NADH + 5 H(+)(in) = a ubiquinol + NAD(+) + 4 H(+)(out). In terms of biological role, core subunit of the mitochondrial membrane respiratory chain NADH dehydrogenase (Complex I) which catalyzes electron transfer from NADH through the respiratory chain, using ubiquinone as an electron acceptor. Essential for the catalytic activity and assembly of complex I. This is NADH-ubiquinone oxidoreductase chain 1 (MT-ND1) from Saguinus leucopus (Silvery-brown bare-face tamarin).